Reading from the N-terminus, the 432-residue chain is D-amino acid dehydrogenase (432 aa).

3 to 17 (VVILGSGVVGVASAW) is a binding site for FAD.

This sequence belongs to the DadA oxidoreductase family. Requires FAD as cofactor.

The catalysed reaction is a D-alpha-amino acid + A + H2O = a 2-oxocarboxylate + AH2 + NH4(+). Its pathway is amino-acid degradation; D-alanine degradation; NH(3) and pyruvate from D-alanine: step 1/1. Its function is as follows. Oxidative deamination of D-amino acids. The protein is D-amino acid dehydrogenase of Shigella boydii serotype 18 (strain CDC 3083-94 / BS512).